We begin with the raw amino-acid sequence, 515 residues long: Maturase K (515 aa).

The protein belongs to the intron maturase 2 family. MatK subfamily.

Its subcellular location is the plastid. It localises to the chloroplast. In terms of biological role, usually encoded in the trnK tRNA gene intron. Probably assists in splicing its own and other chloroplast group II introns. This chain is Maturase K, found in Pinus pumila (Dwarf Siberian pine).